Reading from the N-terminus, the 569-residue chain is MYPKEEHSAGGISSSVNYLDGAYEYPNPTQTFGTSSPAEPASVGYYPAPPDPHEEHLQTLGGGSSSPLMFAPSSPQLSPYLSHHGGHHTTPHQVSYYLDSSSSTVYRSSVVSSQQAAVGLCEELCSATDRQELYTGSRAAGGFDSGKETRFCAVCSDYASGYHYGVWSCEGCKAFFKRSIQGHNDYVCPATNQCTIDRNRRKSCQACRLRKCYEVGMMKGGIRKDRGGRSVRRERRRSSNEDRDKSSSDQCSRAGVRTTGPQDKRKKRSGGVVSTLCMSPDQVLLLLLGAEPPAVCSRQKHSRPYTEITMMSLLTNMADKELVHMIAWAKKVPGFQDLSLHDQVQLLESSWLEVLMIGLIWRSIHSPGKLIFAQDLILDRSEGECVEGMAEIFDMLLATVARFRSLKLKLEEFVCLKAIILINSGAFSFCSSPVEPLMDNFMVQCMLDNITDALIYCISKSGASLQLQSRRQAQLLLLLSHIRHMSNKGMEHLYRMKCKNRVPLYDLLLEMLDAQRFQSSGKVQRVWSQSEKNPPSTPTTSSSSSNNSPRGGAAAIQSNGACHSHSPDP.

The segment at 1 to 151 (MYPKEEHSAG…GFDSGKETRF (151 aa)) is modulating. The segment covering 28 to 37 (PTQTFGTSSP) has biased composition (polar residues). The disordered stretch occupies residues 28-65 (PTQTFGTSSPAEPASVGYYPAPPDPHEEHLQTLGGGSS). 2 consecutive NR C4-type zinc fingers follow at residues 152–172 (CAVCSDYASGYHYGVWSCEGC) and 188–212 (CPATNQCTIDRNRRKSCQACRLRKC). The segment at residues 152 to 217 (CAVCSDYASG…RLRKCYEVGM (66 aa)) is a DNA-binding region (nuclear receptor). Residues 218-278 (MKGGIRKDRG…SGGVVSTLCM (61 aa)) form a hinge region. Positions 223–271 (RKDRGGRSVRRERRRSSNEDRDKSSSDQCSRAGVRTTGPQDKRKKRSGG) are disordered. Basic and acidic residues predominate over residues 237–247 (RSSNEDRDKSS). The 237-residue stretch at 279–515 (SPDQVLLLLL…DLLLEMLDAQ (237 aa)) folds into the NR LBD domain. Positions 523 to 532 (VQRVWSQSEK) are enriched in polar residues. The tract at residues 523-569 (VQRVWSQSEKNPPSTPTTSSSSSNNSPRGGAAAIQSNGACHSHSPDP) is disordered. Low complexity predominate over residues 538 to 549 (PTTSSSSSNNSP).

Belongs to the nuclear hormone receptor family. NR3 subfamily. In terms of assembly, binds DNA as a homodimer. Can form a heterodimer with ER-beta.

Its subcellular location is the nucleus. In terms of biological role, the steroid hormones and their receptors are involved in the regulation of eukaryotic gene expression and affect cellular proliferation and differentiation in target tissues. In Danio rerio (Zebrafish), this protein is Estrogen receptor (esr1).